Consider the following 133-residue polypeptide: Norrin (133 aa).

A signal peptide spans 1 to 24 (MRKHVLAASFSMLSLLVIMGDTDS). Intrachain disulfides connect C39-C96, C55-C110, C65-C126, and C69-C128. Residues 39–132 (CMRHHYVDSI…ILSCHCEECN (94 aa)) form the CTCK domain.

As to quaternary structure, homodimer; disulfide-linked. Component of a complex, at least composed of TSPAN12, FZD4, LRP5/6 and norrin (NDP). Binds FZD4 with high affinity. Interacts with LRP6 (via Beta-propellers 1 and 2). As to expression, expressed in the outer nuclear, inner nuclear and ganglion cell layers of the retina, and in fetal and adult brain.

The protein localises to the secreted. Its function is as follows. Activates the canonical Wnt signaling pathway through FZD4 and LRP5 coreceptor. Plays a central role in retinal vascularization by acting as a ligand for FZD4 that signals via stabilizing beta-catenin (CTNNB1) and activating LEF/TCF-mediated transcriptional programs. Acts in concert with TSPAN12 to activate FZD4 independently of the Wnt-dependent activation of FZD4, suggesting the existence of a Wnt-independent signaling that also promote accumulation the beta-catenin (CTNNB1). May be involved in a pathway that regulates neural cell differentiation and proliferation. Possible role in neuroectodermal cell-cell interaction. The sequence is that of Norrin (NDP) from Homo sapiens (Human).